The chain runs to 138 residues: Acidic phospholipase A2 Ts-A1 (138 aa).

A signal peptide spans 1 to 16 (MRTLWIMAVLQVGVEG). 7 disulfides stabilise this stretch: Cys42-Cys131, Cys44-Cys60, Cys59-Cys111, Cys65-Cys138, Cys66-Cys104, Cys73-Cys97, and Cys91-Cys102. The Ca(2+) site is built by Phe43, Gly45, and Gly47. The active site involves His63. Asp64 is a binding site for Ca(2+). The active site involves Asp105.

Requires Ca(2+) as cofactor. As to expression, expressed by the venom gland.

Its subcellular location is the secreted. The catalysed reaction is a 1,2-diacyl-sn-glycero-3-phosphocholine + H2O = a 1-acyl-sn-glycero-3-phosphocholine + a fatty acid + H(+). Functionally, snake venom phospholipase A2 (PLA2) that shows a moderate inhibition of ADP-induced human platelet aggregation when tested on platelet rich plasma. Exhibits high hydrolytic activities and prefers the anionic micelles (dPPC with deoxycholate) to the zwitterionic micelles (dPPC with Triton X-100). PLA2 catalyzes the calcium-dependent hydrolysis of the 2-acyl groups in 3-sn-phosphoglycerides. The chain is Acidic phospholipase A2 Ts-A1 from Trimeresurus stejnegeri (Chinese green tree viper).